The primary structure comprises 314 residues: FHA domain-containing protein DDL (314 aa).

Positions 1-10 (MAPSSRSPSP) are enriched in low complexity. Residues 1–146 (MAPSSRSPSP…NVEEDSVARM (146 aa)) are disordered. The span at 18-127 (ARGEKEIGRS…AIASRHDEGS (110 aa)) shows a compositional bias: basic and acidic residues. A Phosphoserine modification is found at serine 133. The region spanning 219–282 (YLFGRERRIA…NKTYINESPI (64 aa)) is the FHA domain.

In terms of assembly, interacts with DCL1 (via N-terminus). In terms of tissue distribution, expressed in roots, lateral roots, vascular strands of roots and leaves, vegetative meristems, pollen and developing seeds.

It is found in the nucleus. In terms of biological role, involved in the microRNA (miRNA) and short interfering RNA (siRNA) biogenesis. May facilitate DCL1 to access or recognize primary miRNAs. Binds RNA non-specifically. This is FHA domain-containing protein DDL (DDL) from Arabidopsis thaliana (Mouse-ear cress).